A 231-amino-acid chain; its full sequence is Large ribosomal subunit protein uL1 (231 aa).

The protein belongs to the universal ribosomal protein uL1 family. Part of the 50S ribosomal subunit.

Its function is as follows. Binds directly to 23S rRNA. The L1 stalk is quite mobile in the ribosome, and is involved in E site tRNA release. Functionally, protein L1 is also a translational repressor protein, it controls the translation of the L11 operon by binding to its mRNA. This chain is Large ribosomal subunit protein uL1, found in Halalkalibacterium halodurans (strain ATCC BAA-125 / DSM 18197 / FERM 7344 / JCM 9153 / C-125) (Bacillus halodurans).